The following is a 497-amino-acid chain: Arabinose import ATP-binding protein AraG (497 aa).

ABC transporter domains are found at residues 6–242 and 250–497; these read LRFD…MVGR and FRPR…ALPA. 38–45 contributes to the ATP binding site; that stretch reads GENGAGKS.

The protein belongs to the ABC transporter superfamily. Arabinose importer (TC 3.A.1.2.2) family. In terms of assembly, the complex is composed of two ATP-binding proteins (AraG), two transmembrane proteins (AraH) and a solute-binding protein (AraF).

The protein localises to the cell inner membrane. The catalysed reaction is L-arabinose(out) + ATP + H2O = L-arabinose(in) + ADP + phosphate + H(+). Its function is as follows. Part of the ABC transporter complex AraFGH involved in arabinose import. Responsible for energy coupling to the transport system. The chain is Arabinose import ATP-binding protein AraG from Chromohalobacter salexigens (strain ATCC BAA-138 / DSM 3043 / CIP 106854 / NCIMB 13768 / 1H11).